The sequence spans 584 residues: Negative regulator of RAS-cAMP pathway (584 aa).

A Phosphothreonine modification is found at Thr-25. 5 disordered regions span residues 95 to 167 (PIKP…STTS), 209 to 279 (PLQS…SKTS), 291 to 320 (SEDEDSDWDSVSNDSEFYADEDDEEYDDYN), 343 to 366 (NLDSTKSSVSSANTINSNTSHDPV), and 381 to 432 (SNSN…SLKT). 3 stretches are compositionally biased toward polar residues: residues 114–127 (PPTTAKQNVLTRPM), 229–254 (CIDNETSKSTSPTLENMGSRKSSFPQ), and 267–278 (NDQNGQLSLSKT). A phosphoserine mark is found at Ser-247 and Ser-276. A compositionally biased stretch (acidic residues) spans 307 to 320 (FYADEDDEEYDDYN). The span at 343–363 (NLDSTKSSVSSANTINSNTSH) shows a compositional bias: polar residues. Residues 381–392 (SNSNNHNTAHSE) show a composition bias toward low complexity. Polar residues predominate over residues 398–432 (VSPTPQSSHSNIGPQPQQNPPSANGIKQQKPSLKT). Ser-442 carries the phosphoserine modification. Residue Ser-518 is modified to Phosphoserine; by PKA. A disordered region spans residues 551-584 (DNTSIANSNGNGNDDTSNQRTEALGRKTSNGGRI). Low complexity predominate over residues 557-568 (NSNGNGNDDTSN).

It localises to the nucleus. Functionally, negative regulator of Ras-cAMP pathway. Involved in transcriptional regulation of galactose-inducible genes. The sequence is that of Negative regulator of RAS-cAMP pathway (MKS1) from Saccharomyces cerevisiae (strain ATCC 204508 / S288c) (Baker's yeast).